Consider the following 354-residue polypeptide: Carbonic anhydrase 12 (354 aa).

The first 24 residues, 1-24 (MPHRSLRATVVLLLVILKKQPSSS), serve as a signal peptide directing secretion. Residues 25-301 (APLNGSKWTY…QGLLTDTGLS (277 aa)) lie on the Extracellular side of the membrane. N-linked (GlcNAc...) asparagine glycans are attached at residues N28, N42, N80, and N88. The region spanning 30-290 (SKWTYVGPAG…FDERLVYISF (261 aa)) is the Alpha-carbonic anhydrase domain. Cysteines 50 and 231 form a disulfide. H94 functions as the Proton donor/acceptor in the catalytic mechanism. The Zn(2+) site is built by H120, H122, and H146. 227–228 (TT) provides a ligand contact to substrate. The chain crosses the membrane as a helical span at residues 302–322 (LGIILSVALAGVLGISIVLAV). Over 323-354 (SIWLFKRKKSKKGDNKGVIYKPAIKKEAEVHA) the chain is Cytoplasmic.

It belongs to the alpha-carbonic anhydrase family. In terms of assembly, homodimer. Zn(2+) is required as a cofactor.

The protein resides in the membrane. Its subcellular location is the cell membrane. It carries out the reaction hydrogencarbonate + H(+) = CO2 + H2O. Its activity is regulated as follows. Inhibited by acetazolamide. Functionally, reversible hydration of carbon dioxide. The chain is Carbonic anhydrase 12 from Mus musculus (Mouse).